The sequence spans 406 residues: Cysteine--tRNA ligase (406 aa).

Cys16 lines the Zn(2+) pocket. Positions 18-28 match the 'HIGH' region motif; that stretch reads PTVYSDVHIGN. Positions 192, 218, and 222 each coordinate Zn(2+). Positions 250 to 254 match the 'KMSKS' region motif; sequence KMAKS. Residue Lys253 participates in ATP binding.

Belongs to the class-I aminoacyl-tRNA synthetase family. In terms of assembly, monomer. Zn(2+) is required as a cofactor.

It localises to the cytoplasm. The catalysed reaction is tRNA(Cys) + L-cysteine + ATP = L-cysteinyl-tRNA(Cys) + AMP + diphosphate. This is Cysteine--tRNA ligase from Mesomycoplasma hyopneumoniae (strain J / ATCC 25934 / NCTC 10110) (Mycoplasma hyopneumoniae).